A 136-amino-acid chain; its full sequence is Aspartate 1-decarboxylase (136 aa).

Ser25 acts as the Schiff-base intermediate with substrate; via pyruvic acid in catalysis. Position 25 is a pyruvic acid (Ser) (Ser25). Thr57 lines the substrate pocket. The active-site Proton donor is the Tyr58. 73-75 contributes to the substrate binding site; sequence GAA. The interval 117 to 136 is disordered; sequence IFQLGEETTPEEAPSLEQRN.

The protein belongs to the PanD family. In terms of assembly, heterooctamer of four alpha and four beta subunits. Pyruvate serves as cofactor. In terms of processing, is synthesized initially as an inactive proenzyme, which is activated by self-cleavage at a specific serine bond to produce a beta-subunit with a hydroxyl group at its C-terminus and an alpha-subunit with a pyruvoyl group at its N-terminus.

Its subcellular location is the cytoplasm. It catalyses the reaction L-aspartate + H(+) = beta-alanine + CO2. It participates in cofactor biosynthesis; (R)-pantothenate biosynthesis; beta-alanine from L-aspartate: step 1/1. Functionally, catalyzes the pyruvoyl-dependent decarboxylation of aspartate to produce beta-alanine. The chain is Aspartate 1-decarboxylase from Chloroherpeton thalassium (strain ATCC 35110 / GB-78).